The chain runs to 121 residues: Large ribosomal subunit protein uL18 (121 aa).

It belongs to the universal ribosomal protein uL18 family. Part of the 50S ribosomal subunit; part of the 5S rRNA/L5/L18/L25 subcomplex. Contacts the 5S and 23S rRNAs.

Its function is as follows. This is one of the proteins that bind and probably mediate the attachment of the 5S RNA into the large ribosomal subunit, where it forms part of the central protuberance. This is Large ribosomal subunit protein uL18 from Albidiferax ferrireducens (strain ATCC BAA-621 / DSM 15236 / T118) (Rhodoferax ferrireducens).